The primary structure comprises 1258 residues: Phospholipid-transporting ATPase C887.12 (1258 aa).

Disordered stretches follow at residues 1 to 41 and 53 to 83; these read MARD…LGED and YISS…SKAN. The Cytoplasmic portion of the chain corresponds to 1–183; it reads MARDVDNKQN…PKFLKEQFSK (183 aa). Residues 53 to 64 are compositionally biased toward polar residues; it reads YISSSGQNSTNP. The chain crosses the membrane as a helical span at residues 184–204; sequence YANLFFLFTAVVQQIPGITPV. The Lumenal portion of the chain corresponds to 205–208; that stretch reads NRYT. A helical transmembrane segment spans residues 209 to 229; it reads TIGPMLIVLSVSGIKEIMEDI. Topologically, residues 230–406 are cytoplasmic; that stretch reads KRKKQDQELN…TSVEKQVNSQ (177 aa). The helical transmembrane segment at 407–427 threads the bilayer; the sequence is ILFLLCIFVFLCFASSLGALI. The Lumenal segment spans residues 428–451; sequence HRSVYGSALSYVKYTSNRAGMFFK. The chain crosses the membrane as a helical span at residues 452–472; that stretch reads GLLTFWILYSNLVPISLFVTF. Topologically, residues 473-974 are cytoplasmic; the sequence is ELVRYIQAQL…KLILYSFYKN (502 aa). Asp518 serves as the catalytic 4-aspartylphosphate intermediate. ATP-binding residues include Asp518, Lys519, Thr520, Glu613, Phe654, Ser656, Lys659, Lys677, Arg710, Thr711, Thr790, Gly791, Asp792, Arg883, and Lys889. Mg(2+) is bound at residue Asp518. Thr520 serves as a coordination point for Mg(2+). Mg(2+) is bound at residue Asp909. Residues Asn912 and Asp913 each coordinate ATP. A Mg(2+)-binding site is contributed by Asp913. Residues 975 to 995 form a helical membrane-spanning segment; it reads IALYMTQFWYAFCNAFSGQVI. The Lumenal portion of the chain corresponds to 996 to 998; it reads FES. Residues 999–1019 form a helical membrane-spanning segment; it reads WSISLYNVLFTVLPPVVIGIF. Residues 1020–1051 are Cytoplasmic-facing; the sequence is DQFVSAGQLFQYPQLYQLGQRSEFFNLKRFWS. A helical membrane pass occupies residues 1052-1072; sequence WITNGFYHSLLLFLCSIAVFY. Residues 1073-1086 lie on the Lumenal side of the membrane; the sequence is YDGPNKDGLASGHW. A helical transmembrane segment spans residues 1087–1107; it reads VWGTTLYAAILATVLGKAALI. Lys1103 serves as a coordination point for a 1,2-diacyl-sn-glycero-3-phospho-(1D-myo-inositol 4-phosphate). At 1108–1115 the chain is on the cytoplasmic side; it reads SNHWTQYT. The helical transmembrane segment at 1116–1136 threads the bilayer; the sequence is VIATLGSFLLWIVFMPIYAVA. Topologically, residues 1137 to 1148 are lumenal; sequence APAIGFSKEYYG. Residues 1149–1169 form a helical membrane-spanning segment; sequence IIPHLYGNLKFWASLLVLPTI. Over 1170 to 1258 the chain is Cytoplasmic; the sequence is ALMRDFVWKY…HTRGAYGEMR (89 aa). Residues Arg1173, Trp1177, Lys1178, Tyr1189, and His1190 each coordinate a 1,2-diacyl-sn-glycero-3-phospho-(1D-myo-inositol 4-phosphate).

Belongs to the cation transport ATPase (P-type) (TC 3.A.3) family. Type IV subfamily. Mg(2+) serves as cofactor.

The protein resides in the endoplasmic reticulum membrane. It localises to the golgi apparatus. Its subcellular location is the trans-Golgi network membrane. It catalyses the reaction ATP + H2O + phospholipidSide 1 = ADP + phosphate + phospholipidSide 2.. It carries out the reaction a 1,2-diacyl-sn-glycero-3-phospho-L-serine(out) + ATP + H2O = a 1,2-diacyl-sn-glycero-3-phospho-L-serine(in) + ADP + phosphate + H(+). The catalysed reaction is a 1,2-diacyl-sn-glycero-3-phosphoethanolamine(out) + ATP + H2O = a 1,2-diacyl-sn-glycero-3-phosphoethanolamine(in) + ADP + phosphate + H(+). Catalytic component of a P4-ATPase flippase complex which catalyzes the hydrolysis of ATP coupled to the transport of phosphatidylserine and small amounts of ethanolamine from the lumen to the cytosolic leaflet of the trans-Golgi network and ensures the maintenance of asymmetric distribution of phospholipids. In Schizosaccharomyces pombe (strain 972 / ATCC 24843) (Fission yeast), this protein is Phospholipid-transporting ATPase C887.12.